Consider the following 357-residue polypeptide: UDP-N-acetylglucosamine--N-acetylmuramyl-(pentapeptide) pyrophosphoryl-undecaprenol N-acetylglucosamine transferase (357 aa).

Residues 12-14 (TGG), N124, R163, S191, I245, 264-269 (ALTVSE), and Q290 each bind UDP-N-acetyl-alpha-D-glucosamine.

This sequence belongs to the glycosyltransferase 28 family. MurG subfamily.

Its subcellular location is the cell inner membrane. The catalysed reaction is di-trans,octa-cis-undecaprenyl diphospho-N-acetyl-alpha-D-muramoyl-L-alanyl-D-glutamyl-meso-2,6-diaminopimeloyl-D-alanyl-D-alanine + UDP-N-acetyl-alpha-D-glucosamine = di-trans,octa-cis-undecaprenyl diphospho-[N-acetyl-alpha-D-glucosaminyl-(1-&gt;4)]-N-acetyl-alpha-D-muramoyl-L-alanyl-D-glutamyl-meso-2,6-diaminopimeloyl-D-alanyl-D-alanine + UDP + H(+). The protein operates within cell wall biogenesis; peptidoglycan biosynthesis. Cell wall formation. Catalyzes the transfer of a GlcNAc subunit on undecaprenyl-pyrophosphoryl-MurNAc-pentapeptide (lipid intermediate I) to form undecaprenyl-pyrophosphoryl-MurNAc-(pentapeptide)GlcNAc (lipid intermediate II). The chain is UDP-N-acetylglucosamine--N-acetylmuramyl-(pentapeptide) pyrophosphoryl-undecaprenol N-acetylglucosamine transferase from Nitrosospira multiformis (strain ATCC 25196 / NCIMB 11849 / C 71).